The sequence spans 425 residues: Synaptotagmin-4 (425 aa).

Residues 1-16 (MAPITTSRVEFDEIPT) are Vesicular-facing. A helical transmembrane segment spans residues 17–37 (VVGIFSAFGLVFTVSLFAWIC). At 38-425 (CQRRSAKSNK…IAKWHMLCDG (388 aa)) the chain is on the cytoplasmic side. Disordered regions lie at residues 102–121 (NGNF…LENV) and 126–147 (FPET…SLTS). Residues 105 to 119 (FPKTNPKAGSSSDLE) show a composition bias toward polar residues. A Phosphoserine; by MAPK8 modification is found at serine 135. Over residues 137–146 (ESLKSSTSLT) the composition is skewed to low complexity. 2 consecutive C2 domains span residues 153 to 274 (KLGT…MLMT) and 287 to 420 (GRGE…AKWH). Residues aspartate 246, serine 249, and aspartate 252 each coordinate Ca(2+).

The protein belongs to the synaptotagmin family. In terms of assembly, interacts with KIF1A; the interaction increases in presence of calcium and decreases when SYT4 is phosphorylated at Ser-135. It depends on Ca(2+) as a cofactor. Post-translationally, phosphorylation at Ser-135 by MAPK8/JNK1 reduces interaction with KIF1A and neuronal dense core vesicles mobility. In terms of tissue distribution, widely expressed. Expressed in the brain. Expressed in pituitary gland, cerebellum, cortex, hypothalamus and hippocampus.

The protein resides in the cytoplasmic vesicle. The protein localises to the secretory vesicle. It is found in the neuronal dense core vesicle membrane. Functionally, synaptotagmin family member which does not bind Ca(2+). Involved in neuronal dense core vesicles (DCVs) mobility through its interaction with KIF1A. Upon increased neuronal activity, phosphorylation by MAPK8/JNK1 destabilizes the interaction with KIF1A and captures DCVs to synapses. Plays a role in dendrite formation by melanocytes. This Rattus norvegicus (Rat) protein is Synaptotagmin-4 (Syt4).